Consider the following 133-residue polypeptide: Napin-1 (133 aa).

2 propeptides span residues 31 to 49 (PSWT…EKQG) and 131 to 133 (PSY).

It belongs to the 2S seed storage albumins family. As to quaternary structure, the mature protein consists of a small and a large chain linked by disulfide bonds. In terms of tissue distribution, cotyledons and the axis.

The small, basic, water-soluble napins are one of the two major kinds of storage proteins synthesized in the seed during its maturation. The polypeptide is Napin-1 (Brassica napus (Rape)).